We begin with the raw amino-acid sequence, 408 residues long: MKDVLERFLGYIKVDTQSSEESDTVPTTKTQLEFAKKLGEELKAIGLKDVSVDESGYVMATLESNIDKKVPAIGFIAHMDTSPDLSGTNINPRIVEKYDGQDIVLNKEKNIVLKINEFPEILEYKGQDIVVTDGNTLLGADDKAGIAEIITAMEYLINHPEIKHGTIKVGFTPDEEVGKGADHFDVKKFGADLAYTLDGGGIGELECETFNAAKAKVIIEGRNVHPGSAKNKMTNAVLVANKFINMLPENEVPERTEGYEGFFHLLSVKSEVETAELNYIIRDFDRKKFEERKEQIKEVGKKINEEYNKEIVCVKVEDQYYNMKEKIDEVKYVVDIAYDAMKAIDIEPILVPIRGGTDGSRLSFMGLPTPNLFAGGHNFHGRFEFVPVLSMEKAAELVVKIAELYANR.

H78 contributes to the Zn(2+) binding site. Residue D80 is part of the active site. D141 serves as a coordination point for Zn(2+). The Proton acceptor role is filled by E175. E176, D198, and H380 together coordinate Zn(2+).

It belongs to the peptidase M20B family. Zn(2+) is required as a cofactor.

The protein localises to the cytoplasm. It carries out the reaction Release of the N-terminal residue from a tripeptide.. In terms of biological role, cleaves the N-terminal amino acid of tripeptides. This Clostridium botulinum (strain Langeland / NCTC 10281 / Type F) protein is Peptidase T.